Consider the following 130-residue polypeptide: Small ribosomal subunit protein uS9 (130 aa).

The protein belongs to the universal ribosomal protein uS9 family.

This is Small ribosomal subunit protein uS9 from Pectobacterium carotovorum subsp. carotovorum (strain PC1).